The sequence spans 101 residues: MSSTLIVQLDMRTLCQEADITADYVVEIVEHGIVEPSGRTPEEWLFDDQAPLLARRAAKLHQELELEWEGVALALELLQEVQQLRSENSMLKQRLGRFTQM.

It belongs to the CbpM family.

Functionally, interacts with CbpA and inhibits both the DnaJ-like co-chaperone activity and the DNA binding activity of CbpA. Together with CbpA, modulates the activity of the DnaK chaperone system. Does not inhibit the co-chaperone activity of DnaJ. This is Chaperone modulatory protein CbpM from Pseudomonas putida (strain W619).